We begin with the raw amino-acid sequence, 330 residues long: T-cell surface glycoprotein CD1b4 (330 aa).

An N-terminal signal peptide occupies residues 1-15; that stretch reads MLLLALAFFFPAGDT. At 16-299 the chain is on the extracellular side; the sequence is QNVLPGKISF…LYWGHSISIG (284 aa). N-linked (GlcNAc...) asparagine glycosylation is found at Asn-35, Asn-72, and Asn-143. 2 disulfides stabilise this stretch: Cys-117-Cys-181 and Cys-221-Cys-276. The Ig-like domain maps to 182 to 292; sequence PRYLMSVIEA…LEGQDIILYW (111 aa). Residues 300-320 form a helical membrane-spanning segment; it reads WIILAVLVPCLIVLVLFILWF. Residues 321 to 330 are Cytoplasmic-facing; that stretch reads YRRWSYEDIF. The Internalization signal signature appears at 326–329; it reads YEDI.

As to quaternary structure, heterodimer with B2M (beta-2-microglobulin). Interacts with saposin C.

Its subcellular location is the cell membrane. It localises to the endosome membrane. The protein localises to the lysosome membrane. Its function is as follows. Antigen-presenting protein that binds self and non-self lipid and glycolipid antigens and presents them to T-cell receptors on natural killer T-cells. In Cavia porcellus (Guinea pig), this protein is T-cell surface glycoprotein CD1b4 (CD1B4).